Reading from the N-terminus, the 113-residue chain is MLLLLVPVLEVIFTLGGTRAQSVTQLGSHVSVSEGALVLLRCNYSSSVPPYLFWYVQYPNQGLQLLLKYTSAATLVKGINGFEAEFKKSETSFHLTKPSAHMSDAAEYFCAVS.

Positions 1-20 (MLLLLVPVLEVIFTLGGTRA) are cleaved as a signal peptide. In terms of domain architecture, Ig-like spans 21-113 (QSVTQLGSHV…DAAEYFCAVS (93 aa)). Cysteine 42 and cysteine 110 are disulfide-bonded. The N-linked (GlcNAc...) asparagine glycan is linked to asparagine 43.

In terms of assembly, alpha-beta TR is a heterodimer composed of an alpha and beta chain; disulfide-linked. The alpha-beta TR is associated with the transmembrane signaling CD3 coreceptor proteins to form the TR-CD3 (TcR or TCR). The assembly of alpha-beta TR heterodimers with CD3 occurs in the endoplasmic reticulum where a single alpha-beta TR heterodimer associates with one CD3D-CD3E heterodimer, one CD3G-CD3E heterodimer and one CD247 homodimer forming a stable octameric structure. CD3D-CD3E and CD3G-CD3E heterodimers preferentially associate with TR alpha and TR beta chains, respectively. The association of the CD247 homodimer is the last step of TcR assembly in the endoplasmic reticulum and is required for transport to the cell surface.

The protein localises to the cell membrane. Functionally, v region of the variable domain of T cell receptor (TR) alpha chain that participates in the antigen recognition. Alpha-beta T cell receptors are antigen specific receptors which are essential to the immune response and are present on the cell surface of T lymphocytes. Recognize peptide-major histocompatibility (MH) (pMH) complexes that are displayed by antigen presenting cells (APC), a prerequisite for efficient T cell adaptive immunity against pathogens. Binding of alpha-beta TR to pMH complex initiates TR-CD3 clustering on the cell surface and intracellular activation of LCK that phosphorylates the ITAM motifs of CD3G, CD3D, CD3E and CD247 enabling the recruitment of ZAP70. In turn ZAP70 phosphorylates LAT, which recruits numerous signaling molecules to form the LAT signalosome. The LAT signalosome propagates signal branching to three major signaling pathways, the calcium, the mitogen-activated protein kinase (MAPK) kinase and the nuclear factor-kappa-B (NF-kB) pathways, leading to the mobilization of transcription factors that are critical for gene expression and essential for T cell growth and differentiation. The T cell repertoire is generated in the thymus, by V-(D)-J rearrangement. This repertoire is then shaped by intrathymic selection events to generate a peripheral T cell pool of self-MH restricted, non-autoaggressive T cells. Post-thymic interaction of alpha-beta TR with the pMH complexes shapes TR structural and functional avidity. The chain is T cell receptor alpha variable 8-4 from Homo sapiens (Human).